We begin with the raw amino-acid sequence, 170 residues long: Large ribosomal subunit protein uL5 (170 aa).

Belongs to the universal ribosomal protein uL5 family. In terms of assembly, part of the 50S ribosomal subunit; contacts the 5S rRNA and probably tRNA. Forms a bridge to the 30S subunit in the 70S ribosome.

Its function is as follows. This is one of the proteins that bind and probably mediate the attachment of the 5S RNA into the large ribosomal subunit, where it forms part of the central protuberance. In the 70S ribosome it contacts protein S13 of the 30S subunit (bridge B1b), connecting the 2 subunits; this bridge is implicated in subunit movement. May contact the P site tRNA; the 5S rRNA and some of its associated proteins might help stabilize positioning of ribosome-bound tRNAs. The sequence is that of Large ribosomal subunit protein uL5 from Thermoplasma volcanium (strain ATCC 51530 / DSM 4299 / JCM 9571 / NBRC 15438 / GSS1).